We begin with the raw amino-acid sequence, 473 residues long: MMKIKYLYQLLLSHISILILAFVIIISLFSHFVKEFAYQNKVEELTSYAVQIANEFQSGQVDMRRLYPYQDILSTRKTQFIIFNEEQQPYFLPEGFHHPPREQLKKSEWNKLKKGQTVTIRADGRFDDEVSLVAQPIFVQNEFKGAVLLISPISGVEQMVNQVNLYMFYAVISTLVITILVSWLLSKFHVKRIQKLREATDKVASGDYDIHLENSYGDEIGVLASDFNIMAKKLKQSRDEIERLEKRRRQFIADVSHELKTPLTTINGLVEGLNSHTIPEDKKDKCFSLISEETKRMLRLVKENLDYEKIRSQQITLNKLDVPLIEVFEIVKEHLQQQAEEKQNKLMIQVEDHVIVHADYDRFIQILVNITKNSIQFTQNGDIWLRGMEGYKETIIEIEDTGIGIPKEDIEHIWERFYKADISRTNTAYGEYGLGLSIVRQLVEMHQGTVEIKSEEGKGTKFIIRLPLTAKQQ.

At 1–9 (MMKIKYLYQ) the chain is on the cytoplasmic side. A helical membrane pass occupies residues 10–30 (LLLSHISILILAFVIIISLFS). At 31–164 (HFVKEFAYQN…GVEQMVNQVN (134 aa)) the chain is on the extracellular side. Residues 165 to 185 (LYMFYAVISTLVITILVSWLL) traverse the membrane as a helical segment. The Cytoplasmic segment spans residues 186-473 (SKFHVKRIQK…IRLPLTAKQQ (288 aa)). An HAMP domain is found at 187–239 (KFHVKRIQKLREATDKVASGDYDIHLENSYGDEIGVLASDFNIMAKKLKQSRD). The Histidine kinase domain maps to 254 to 470 (DVSHELKTPL…KFIIRLPLTA (217 aa)). Residue H257 is modified to Phosphohistidine; by autocatalysis.

The protein resides in the cell membrane. It catalyses the reaction ATP + protein L-histidine = ADP + protein N-phospho-L-histidine.. Could be member of the two-component regulatory system YclK/YclJ. Potentially phosphorylates YclJ. The chain is Sensor histidine kinase YclK (yclK) from Bacillus subtilis (strain 168).